We begin with the raw amino-acid sequence, 776 residues long: DNA ligase (776 aa).

NAD(+) is bound by residues 31–35 (DAEYD), 80–81 (SL), and Glu-112. Residue Lys-114 is the N6-AMP-lysine intermediate of the active site. Residues Arg-135, Glu-172, Lys-288, and Lys-312 each coordinate NAD(+). Residues Cys-406, Cys-409, Cys-436, and Cys-442 each coordinate Zn(2+). Residues 693-776 (AEGLPLAGQT…TFLAEQGIAV (84 aa)) enclose the BRCT domain.

This sequence belongs to the NAD-dependent DNA ligase family. LigA subfamily. The cofactor is Mg(2+). Requires Mn(2+) as cofactor.

The catalysed reaction is NAD(+) + (deoxyribonucleotide)n-3'-hydroxyl + 5'-phospho-(deoxyribonucleotide)m = (deoxyribonucleotide)n+m + AMP + beta-nicotinamide D-nucleotide.. In terms of biological role, DNA ligase that catalyzes the formation of phosphodiester linkages between 5'-phosphoryl and 3'-hydroxyl groups in double-stranded DNA using NAD as a coenzyme and as the energy source for the reaction. It is essential for DNA replication and repair of damaged DNA. In Pseudomonas putida (strain ATCC 47054 / DSM 6125 / CFBP 8728 / NCIMB 11950 / KT2440), this protein is DNA ligase.